A 197-amino-acid polypeptide reads, in one-letter code: Nucleoside triphosphate pyrophosphatase (197 aa).

Aspartate 71 acts as the Proton acceptor in catalysis.

It belongs to the Maf family. It depends on a divalent metal cation as a cofactor.

The protein resides in the cytoplasm. The enzyme catalyses a ribonucleoside 5'-triphosphate + H2O = a ribonucleoside 5'-phosphate + diphosphate + H(+). It catalyses the reaction a 2'-deoxyribonucleoside 5'-triphosphate + H2O = a 2'-deoxyribonucleoside 5'-phosphate + diphosphate + H(+). Nucleoside triphosphate pyrophosphatase. May have a dual role in cell division arrest and in preventing the incorporation of modified nucleotides into cellular nucleic acids. This is Nucleoside triphosphate pyrophosphatase from Nostoc punctiforme (strain ATCC 29133 / PCC 73102).